Consider the following 619-residue polypeptide: ATP-dependent zinc metalloprotease FtsH 1 (619 aa).

The Cytoplasmic segment spans residues 1 to 8 (MADEKRPA). Residues 9–29 (SRAWLGYLLIAVGILVLSGIV) traverse the membrane as a helical segment. Over 30-108 (RSRGRPLVPY…RIEAKSPQTS (79 aa)) the chain is Periplasmic. Residues 109–129 (VWMQVAIWMLPLVLINAAFFM) traverse the membrane as a helical segment. At 130–619 (MLRRAGQGAG…KIAVGPPSAA (490 aa)) the chain is on the cytoplasmic side. 203–210 (GPPGTGKT) is a binding site for ATP. Histidine 426 is a binding site for Zn(2+). The active site involves glutamate 427. Residues histidine 430 and aspartate 503 each contribute to the Zn(2+) site.

It in the central section; belongs to the AAA ATPase family. The protein in the C-terminal section; belongs to the peptidase M41 family. As to quaternary structure, homohexamer. Zn(2+) serves as cofactor.

The protein resides in the cell inner membrane. Functionally, acts as a processive, ATP-dependent zinc metallopeptidase for both cytoplasmic and membrane proteins. Plays a role in the quality control of integral membrane proteins. This chain is ATP-dependent zinc metalloprotease FtsH 1, found in Sorangium cellulosum (strain So ce56) (Polyangium cellulosum (strain So ce56)).